The following is a 277-amino-acid chain: Phosphatidylglycerol--prolipoprotein diacylglyceryl transferase (277 aa).

A run of 4 helical transmembrane segments spans residues 18–38 (ISVK…LLLA), 51–71 (IIVD…RIYY), 89–109 (IWHG…TAII), and 116–136 (ISFW…QAIG). Residue Arg137 coordinates a 1,2-diacyl-sn-glycero-3-phospho-(1'-sn-glycerol). Transmembrane regions (helical) follow at residues 177-197 (QPTF…LLII), 205-225 (GELF…IEGM), and 235-255 (FRVS…IIIY).

The protein belongs to the Lgt family.

It is found in the cell membrane. The catalysed reaction is L-cysteinyl-[prolipoprotein] + a 1,2-diacyl-sn-glycero-3-phospho-(1'-sn-glycerol) = an S-1,2-diacyl-sn-glyceryl-L-cysteinyl-[prolipoprotein] + sn-glycerol 1-phosphate + H(+). Its pathway is protein modification; lipoprotein biosynthesis (diacylglyceryl transfer). Its function is as follows. Catalyzes the transfer of the diacylglyceryl group from phosphatidylglycerol to the sulfhydryl group of the N-terminal cysteine of a prolipoprotein, the first step in the formation of mature lipoproteins. The polypeptide is Phosphatidylglycerol--prolipoprotein diacylglyceryl transferase (Listeria monocytogenes serovar 1/2a (strain ATCC BAA-679 / EGD-e)).